A 449-amino-acid chain; its full sequence is 23S rRNA (uracil(1939)-C(5))-methyltransferase RlmD (449 aa).

The 59-residue stretch at 12 to 70 folds into the TRAM domain; it reads SKQLSAKQSFSVHQLDHLGAGIAQHQGKVVFIPGALPSETVQAQLTEQKKNYARAKLIK. Residues Cys-83, Cys-89, Cys-92, and Cys-170 each contribute to the [4Fe-4S] cluster site. Gln-282, Phe-311, Asn-316, Glu-332, Asp-359, and Asp-379 together coordinate S-adenosyl-L-methionine. Cys-405 functions as the Nucleophile in the catalytic mechanism.

It belongs to the class I-like SAM-binding methyltransferase superfamily. RNA M5U methyltransferase family. RlmD subfamily.

The catalysed reaction is uridine(1939) in 23S rRNA + S-adenosyl-L-methionine = 5-methyluridine(1939) in 23S rRNA + S-adenosyl-L-homocysteine + H(+). Functionally, catalyzes the formation of 5-methyl-uridine at position 1939 (m5U1939) in 23S rRNA. The chain is 23S rRNA (uracil(1939)-C(5))-methyltransferase RlmD from Shewanella sp. (strain MR-4).